The sequence spans 169 residues: Myosin regulatory light chain 11 (169 aa).

Ala2 carries the post-translational modification N,N,N-trimethylalanine. Ser15 and Ser16 each carry phosphoserine. 2 positions are modified to phosphothreonine: Thr25 and Thr35. Positions 25 to 60 (TQIQEFKEAFTVIDQNRDGIIDKEDLRDTFAAMGRL) constitute an EF-hand 1 domain. Residues Asp38, Asn40, Asp42, and Asp49 each coordinate Ca(2+). At Ser75 the chain carries Phosphoserine. EF-hand domains follow at residues 95–130 (DPED…QCDR) and 131–166 (FSQE…GDAK). Phosphothreonine is present on Thr101.

As to quaternary structure, myosin is a hexamer of 2 heavy chains and 4 light chains.

Myosin regulatory subunit that plays an essential role to maintain muscle integrity during early development. Plays a role in regulation of muscle contraction. The chain is Myosin regulatory light chain 11 (Myl11) from Mus musculus (Mouse).